A 363-amino-acid chain; its full sequence is Mannose-1-phosphate guanyltransferase (363 aa).

This sequence belongs to the transferase hexapeptide repeat family.

The protein localises to the cytoplasm. The enzyme catalyses alpha-D-mannose 1-phosphate + GTP + H(+) = GDP-alpha-D-mannose + diphosphate. The protein operates within nucleotide-sugar biosynthesis; GDP-alpha-D-mannose biosynthesis; GDP-alpha-D-mannose from alpha-D-mannose 1-phosphate (GTP route): step 1/1. Involved in cell wall synthesis where it is required for glycosylation. Involved in cell cycle progression through cell-size checkpoint. The polypeptide is Mannose-1-phosphate guanyltransferase (MPG1) (Yarrowia lipolytica (strain CLIB 122 / E 150) (Yeast)).